The chain runs to 668 residues: Patellin-5 (668 aa).

Residues 1–263 (MSQDSATTTP…STTTSTVASR (263 aa)) are disordered. Basic and acidic residues-rich tracts occupy residues 55 to 68 (ESNH…EKVT), 82 to 100 (AAED…ETAK), 107 to 125 (TAED…ETVK), and 132 to 150 (VAED…ETVK). A compositionally biased stretch (polar residues) spans 170-186 (TPETETSEADTSLLVTS). The segment covering 218 to 231 (VEDWTEPELPDEAV) has biased composition (acidic residues). Residues 244–254 (PEPQTPPPPPS) are compositionally biased toward pro residues. Serine 290 is subject to Phosphoserine. Residues 377–552 (DENLGDDLDK…QYGGLSVDNC (176 aa)) form the CRAL-TRIO domain. Positions 556 to 662 (SDFTHDDIAT…KKMLIYRFKV (107 aa)) constitute a GOLD domain.

The protein belongs to the patellin family.

The protein localises to the membrane. Its subcellular location is the cytoplasm. In terms of biological role, carrier protein that may be involved in membrane-trafficking events associated with cell plate formation during cytokinesis. Binds to some hydrophobic molecules such as phosphoinositides and promotes their transfer between the different cellular sites. The chain is Patellin-5 (PATL5) from Arabidopsis thaliana (Mouse-ear cress).